Consider the following 370-residue polypeptide: Uroporphyrinogen decarboxylase (370 aa).

Substrate is bound by residues 29 to 33 (RQAGR), D79, Y155, S210, and H342.

It belongs to the uroporphyrinogen decarboxylase family. As to quaternary structure, homodimer.

The protein localises to the cytoplasm. It carries out the reaction uroporphyrinogen III + 4 H(+) = coproporphyrinogen III + 4 CO2. It participates in porphyrin-containing compound metabolism; protoporphyrin-IX biosynthesis; coproporphyrinogen-III from 5-aminolevulinate: step 4/4. Catalyzes the decarboxylation of four acetate groups of uroporphyrinogen-III to yield coproporphyrinogen-III. The protein is Uroporphyrinogen decarboxylase of Acidovorax ebreus (strain TPSY) (Diaphorobacter sp. (strain TPSY)).